The primary structure comprises 79 residues: Acyl carrier protein (79 aa).

The 76-residue stretch at 2–77 (SEIGERVKKI…DATKFLEKNA (76 aa)) folds into the Carrier domain. O-(pantetheine 4'-phosphoryl)serine is present on Ser-37.

It belongs to the acyl carrier protein (ACP) family. Post-translationally, 4'-phosphopantetheine is transferred from CoA to a specific serine of apo-ACP by AcpS. This modification is essential for activity because fatty acids are bound in thioester linkage to the sulfhydryl of the prosthetic group.

Its subcellular location is the cytoplasm. The protein operates within lipid metabolism; fatty acid biosynthesis. In terms of biological role, carrier of the growing fatty acid chain in fatty acid biosynthesis. The polypeptide is Acyl carrier protein (Nitrobacter hamburgensis (strain DSM 10229 / NCIMB 13809 / X14)).